The chain runs to 219 residues: Guanylate kinase (219 aa).

The region spanning 15–194 (GLMLVISSPS…AFSSVRAIVE (180 aa)) is the Guanylate kinase-like domain. 22 to 29 (SPSGAGKS) contacts ATP.

The protein belongs to the guanylate kinase family.

The protein resides in the cytoplasm. It catalyses the reaction GMP + ATP = GDP + ADP. Its function is as follows. Essential for recycling GMP and indirectly, cGMP. The sequence is that of Guanylate kinase from Rhizobium meliloti (strain 1021) (Ensifer meliloti).